The sequence spans 140 residues: Histone H2B (140 aa).

Over residues 1-10 the composition is skewed to basic and acidic residues; that stretch reads MPPKAAEKKP. Residues 1 to 48 are disordered; sequence MPPKAAEKKPSTGGKAPAGKAPAEKKEAGKKTAAAASGDKKKRGKTRK. N6-acetyllysine; alternate occurs at positions 8 and 9. Glycyl lysine isopeptide (Lys-Gly) (interchain with G-Cter in SUMO); alternate cross-links involve residues K8 and K9. Positions 11-21 are enriched in low complexity; that stretch reads STGGKAPAGKA. K15 is modified (N6-acetyllysine). Position 25 is an N6-acetyllysine; alternate (K25). K25 is covalently cross-linked (Glycyl lysine isopeptide (Lys-Gly) (interchain with G-Cter in SUMO); alternate). K26 is covalently cross-linked (Glycyl lysine isopeptide (Lys-Gly) (interchain with G-Cter in SUMO)). K134 participates in a covalent cross-link: Glycyl lysine isopeptide (Lys-Gly) (interchain with G-Cter in ubiquitin).

The protein belongs to the histone H2B family. In terms of assembly, the nucleosome is a histone octamer containing two molecules each of H2A, H2B, H3 and H4 assembled in one H3-H4 heterotetramer and two H2A-H2B heterodimers. The octamer wraps approximately 147 bp of DNA. In terms of processing, monoubiquitinated by the ubc2-bre1 complex to form H2BK123ub1. H2BK123ub1 gives a specific tag for epigenetic transcriptional activation and is also prerequisite for H3K4me and H3K79me formation. H2BK123ub1 also modulates the formation of double-strand breaks during meiosis and is a prerequisite for DNA-damage checkpoint activation. Post-translationally, acetylated by gcn5 to form H2BK11ac and H2BK16ac. H2BK16ac can also be formed by esa1. Acetylation of N-terminal lysines and particularly formation of H2BK11acK16ac has a positive effect on transcription. Sumoylation to form H2BK6su or H2BK7su, and probably also H2BK16su or H2BK17su, occurs preferentially near the telomeres and represses gene transcription.

It localises to the nucleus. The protein localises to the chromosome. Functionally, core component of nucleosome. Nucleosomes wrap and compact DNA into chromatin, limiting DNA accessibility to the cellular machineries which require DNA as a template. Histones thereby play a central role in transcription regulation, DNA repair, DNA replication and chromosomal stability. DNA accessibility is regulated via a complex set of post-translational modifications of histones, also called histone code, and nucleosome remodeling. This chain is Histone H2B (htb1), found in Aspergillus clavatus (strain ATCC 1007 / CBS 513.65 / DSM 816 / NCTC 3887 / NRRL 1 / QM 1276 / 107).